Here is a 670-residue protein sequence, read N- to C-terminus: Zinc finger and BTB domain-containing protein 5 (670 aa).

The region spanning 24-93 (CDCVIVVGNR…MYTSTLMLGE (70 aa)) is the BTB domain. Disordered stretches follow at residues 158–256 (LSSS…QEDG) and 268–382 (EDAQ…SSTD). A compositionally biased stretch (polar residues) spans 170 to 181 (PMSSSMRSSLDQ). S234 carries the phosphoserine modification. A Glycyl lysine isopeptide (Lys-Gly) (interchain with G-Cter in SUMO2) cross-link involves residue K239. The span at 285-295 (SRATQVETSFE) shows a compositional bias: polar residues. Glycyl lysine isopeptide (Lys-Gly) (interchain with G-Cter in SUMO2) cross-links involve residues K317 and K325. Positions 345 to 360 (AEGSESVEVEGVVVSA) are enriched in low complexity. The span at 361–374 (EKIDLSPESSDRSF) shows a compositional bias: basic and acidic residues. Residue S366 is modified to Phosphoserine. Glycyl lysine isopeptide (Lys-Gly) (interchain with G-Cter in SUMO2) cross-links involve residues K399 and K410. Over residues 414–432 (SNFSASQSTDDNLPNTTSD) the composition is skewed to polar residues. Disordered stretches follow at residues 414-433 (SNFS…TSDC) and 442-470 (LLSP…EPAD). A compositionally biased stretch (low complexity) spans 444 to 459 (SPEAGPAGGPSSAPGS). Residues K535, K587, and K590 each participate in a glycyl lysine isopeptide (Lys-Gly) (interchain with G-Cter in SUMO2) cross-link. A C2H2-type 1 zinc finger spans residues 606–628 (YACKICCKTFLTLTDCKKHIRVH). The C2H2-type 2; atypical zinc finger occupies 634-657 (YACLKCGKRFSQSSHLYKHSKTTC). Residues K638 and K651 each participate in a glycyl lysine isopeptide (Lys-Gly) (interchain with G-Cter in SUMO2) cross-link.

It is found in the nucleus. May be involved in transcriptional regulation. The chain is Zinc finger and BTB domain-containing protein 5 (Zbtb5) from Mus musculus (Mouse).